We begin with the raw amino-acid sequence, 131 residues long: mRNA stability protein IGO2 (131 aa).

Polar residues predominate over residues 1 to 13 (MSEDLSPTSSRVD). Positions 1–26 (MSEDLSPTSSRVDLSNPHGFTKEGVD) are disordered. Residue Ser-2 is modified to N-acetylserine. Phosphoserine is present on residues Ser-6, Ser-63, Ser-108, and Ser-119. A disordered region spans residues 81 to 131 (VNNSSNNLPVTNPSGLRESIIRRRMSSSSGGDSISRQGSISSGPPPRSPNK). The span at 106–122 (SSSSGGDSISRQGSISS) shows a compositional bias: low complexity.

It belongs to the endosulfine family. Post-translationally, phosphorylated by RIM15.

Its subcellular location is the cytoplasm. The protein localises to the nucleus. Its function is as follows. Required for TORC1 to properly control gene expression and chronological life span. Plays an essential role in initiation of the G0 program by preventing the degradation of specific nutrient-regulated mRNAs via the 5'-3' mRNA decay pathway. This is mRNA stability protein IGO2 (IGO2) from Saccharomyces cerevisiae (strain ATCC 204508 / S288c) (Baker's yeast).